The following is a 148-amino-acid chain: uncharacterized protein (148 aa).

The segment covering 1–17 (MCPPVRQRPAQAPPAKR) has biased composition (low complexity). 2 disordered regions span residues 1-86 (MCPP…VQSP) and 122-148 (RAHR…TSPC). Basic residues predominate over residues 38–57 (RPPKMQRRPRPPVAKRRRFP). Residues 134–148 (QSRQRPSPDSQTSPC) are compositionally biased toward polar residues.

The protein belongs to the Epstein-Barr virus BLLF2 family.

This is an uncharacterized protein from Homo sapiens (Human).